The chain runs to 415 residues: NAD-dependent protein deacetylase hst4 (415 aa).

The interval 1–26 (MKVEEHVPLIQESRKRKCQSSENASK) is disordered. Residues 40–337 (TGNENVDLSP…RRLKPLLDAP (298 aa)) form the Deacetylase sirtuin-type domain. NAD(+) is bound by residues 65-84 (GAGI…EGLF) and 153-156 (QNID). Catalysis depends on H184, which acts as the Proton acceptor. The Zn(2+) site is built by C192, C195, C214, and C217. Residues 273–275 (GTS), 303–305 (NYD), and L323 each bind NAD(+).

It belongs to the sirtuin family. Class I subfamily. Requires Zn(2+) as cofactor.

It localises to the nucleus. The protein resides in the nucleolus. The enzyme catalyses N(6)-acetyl-L-lysyl-[protein] + NAD(+) + H2O = 2''-O-acetyl-ADP-D-ribose + nicotinamide + L-lysyl-[protein]. Functionally, NAD-dependent histone deacetylase, which contributes to both telomeric and centromeric silencing, proper cell cycle progression, DNA damage control, recombination, and genomic maintenance. The polypeptide is NAD-dependent protein deacetylase hst4 (hst4) (Schizosaccharomyces pombe (strain 972 / ATCC 24843) (Fission yeast)).